The following is a 349-amino-acid chain: S-adenosylmethionine:tRNA ribosyltransferase-isomerase (349 aa).

It belongs to the QueA family. Monomer.

It is found in the cytoplasm. The catalysed reaction is 7-aminomethyl-7-carbaguanosine(34) in tRNA + S-adenosyl-L-methionine = epoxyqueuosine(34) in tRNA + adenine + L-methionine + 2 H(+). It participates in tRNA modification; tRNA-queuosine biosynthesis. Its function is as follows. Transfers and isomerizes the ribose moiety from AdoMet to the 7-aminomethyl group of 7-deazaguanine (preQ1-tRNA) to give epoxyqueuosine (oQ-tRNA). The polypeptide is S-adenosylmethionine:tRNA ribosyltransferase-isomerase (Azotobacter vinelandii (strain DJ / ATCC BAA-1303)).